The chain runs to 217 residues: Adenylate kinase (217 aa).

10-15 contacts ATP; sequence GAGKGT. The segment at 30–59 is NMP; the sequence is STGDMFRAAMKEETPLGLEAKSYIDKGELV. AMP-binding positions include Thr31, Arg36, 57-59, 85-88, and Gln92; these read ELV and GFPR. Residues 126 to 163 are LID; sequence GRRICSVCGTTYHLVFNPPKTPGVCDKDGGDLYQRADD. Arg127 serves as a coordination point for ATP. Residues Cys130 and Cys133 each coordinate Zn(2+). 136 to 137 contacts ATP; sequence TY. Zn(2+)-binding residues include Cys150 and Asp153. AMP-binding residues include Arg160 and Arg171. Gln199 serves as a coordination point for ATP.

Belongs to the adenylate kinase family. As to quaternary structure, monomer.

Its subcellular location is the cytoplasm. The catalysed reaction is AMP + ATP = 2 ADP. The protein operates within purine metabolism; AMP biosynthesis via salvage pathway; AMP from ADP: step 1/1. Its function is as follows. Catalyzes the reversible transfer of the terminal phosphate group between ATP and AMP. Plays an important role in cellular energy homeostasis and in adenine nucleotide metabolism. The chain is Adenylate kinase from Bacillus velezensis (strain DSM 23117 / BGSC 10A6 / LMG 26770 / FZB42) (Bacillus amyloliquefaciens subsp. plantarum).